Here is a 263-residue protein sequence, read N- to C-terminus: Bradykinin-potentiating and C-type natriuretic peptides (263 aa).

Residues 1 to 23 form the signal peptide; the sequence is MFVSRLAASGLLLLALMALSLDG. A propeptide spanning residues 24–30 is cleaved from the precursor; it reads KPVQQWS. Gln-31 carries the pyrrolidone carboxylic acid modification. Positions 42 to 48 are excised as a propeptide; sequence LVVQQWS. Gln-49 bears the Pyrrolidone carboxylic acid mark. A propeptide spanning residues 60-66 is cleaved from the precursor; sequence LVVQQWS. Pyrrolidone carboxylic acid is present on Gln-67. The propeptide occupies 78–84; sequence LVVQQWS. The residue at position 85 (Gln-85) is a Pyrrolidone carboxylic acid. The segment at 89 to 95 is angiotensin-converting enzyme active site binding; that stretch reads PRPKIPP. A propeptide spanning residues 96-102 is cleaved from the precursor; that stretch reads LVVQQWS. Gln-103 is modified (pyrrolidone carboxylic acid). Residues 107–113 form an angiotensin-converting enzyme active site binding region; it reads PRPKIPP. Positions 114–116 are excised as a propeptide; that stretch reads LVV. The residue at position 117 (Gln-117) is a Pyrrolidone carboxylic acid. Residues 128 to 130 constitute a propeptide that is removed on maturation; sequence LLL. Gln-131 bears the Pyrrolidone carboxylic acid mark. A propeptide spanning residues 137-241 is cleaved from the precursor; the sequence is AGGTTALREE…ARRLKGLVKK (105 aa). 2 disordered regions span residues 152-171 and 177-205; these read EAAS…GSKA and RLSK…GKQA. Low complexity predominate over residues 181 to 192; that stretch reads SKGASATSASAS. Basic and acidic residues predominate over residues 194 to 204; that stretch reads PMRDLRTDGKQ. The cysteines at positions 247 and 263 are disulfide-linked.

It in the N-terminal section; belongs to the bradykinin-potentiating peptide family. This sequence in the C-terminal section; belongs to the natriuretic peptide family. As to expression, expressed by the venom gland.

The protein localises to the secreted. Its function is as follows. Inhibits the rabbit lung angiotensin-converting enzyme (ACE) (IC(50)=15 uM). Contracts the rat gastric fundus smooth muscle in a rapid and transient manner. Causes no contraction of the rat gastric fundus smooth muscle even at high concentrations. Causes very weak contraction of the isolated guinea pig ileum. Causes weak contraction on rat uterus. Functionally, inhibits the activity of the angiotensin-converting enzyme (ACE) by a preferential interaction with its C-domain (Ki=30 nM, IC(50)=1.1 uM). It binds ACE in a zinc-independent manner. Also potentiates the hypotensive effects of bradykinin. Causes high contraction of the isolated guinea pig ileum and weak contraction on rat uterus. In terms of biological role, inhibits the activity of the angiotensin-converting enzyme (ACE) by interacting with the same potency to its C- and N-domains. Inhibits the rabbit lung angiotensin-converting enzyme (ACE) (IC(50)=7.1 uM). Causes weak contraction of the isolated guinea pig ileum. Causes weak contraction on rat uterus. Its function is as follows. Inhibits the rabbit lung angiotensin-converting enzyme (ACE) (IC(50)=46 uM). Synthetic Leu3-blomhotin contracts the rat gastric fundus smooth muscle in a rapid and transient manner. Causes moderate contraction of the isolated guinea pig ileum. Causes weak contraction on rat uterus. Causes weak contraction of the isolated guinea pig ileum. Causes about 50-fold more potentiating activity on rat uterus than on guinea pig ileum. Functionally, synthetic peptide potentiates the bradykinin in vivo. In terms of biological role, synthetic peptide does not show any bradykinin-potentiating effects. Its function is as follows. has a vasorelaxant activity in rat aortic strips and a diuretic potency in anesthetized rats. May act by activating natriuretic receptors (NPR1 and/or NPR2). This is Bradykinin-potentiating and C-type natriuretic peptides from Gloydius blomhoffii (Mamushi).